The sequence spans 434 residues: UDP-N-acetylglucosamine 1-carboxyvinyltransferase 1 (434 aa).

22-23 (KN) contacts phosphoenolpyruvate. Residue Arg93 coordinates UDP-N-acetyl-alpha-D-glucosamine. The active-site Proton donor is the Cys117. Cys117 is modified (2-(S-cysteinyl)pyruvic acid O-phosphothioketal). Residues 122 to 126 (RPIDQ), Asp306, and Val328 each bind UDP-N-acetyl-alpha-D-glucosamine.

The protein belongs to the EPSP synthase family. MurA subfamily.

It is found in the cytoplasm. The catalysed reaction is phosphoenolpyruvate + UDP-N-acetyl-alpha-D-glucosamine = UDP-N-acetyl-3-O-(1-carboxyvinyl)-alpha-D-glucosamine + phosphate. It participates in cell wall biogenesis; peptidoglycan biosynthesis. Its function is as follows. Cell wall formation. Adds enolpyruvyl to UDP-N-acetylglucosamine. This chain is UDP-N-acetylglucosamine 1-carboxyvinyltransferase 1, found in Bacillus cereus (strain ATCC 14579 / DSM 31 / CCUG 7414 / JCM 2152 / NBRC 15305 / NCIMB 9373 / NCTC 2599 / NRRL B-3711).